A 186-amino-acid chain; its full sequence is Type 1 phosphatases regulator ypi-1 (186 aa).

The segment covering 1-32 has biased composition (polar residues); that stretch reads MTSVAQRQAQPAQPSTSQTAAPTRTQTETSSP. The disordered stretch occupies residues 1 to 186; it reads MTSVAQRQAQ…SETQGPGGSK (186 aa). Low complexity predominate over residues 82–94; sequence DSSSSSDSSSSSD. Over residues 122–137 the composition is skewed to basic and acidic residues; sequence HDHDHDGREGGCNHDH. Positions 138 to 151 are enriched in basic residues; it reads GRGRKHGNKGKKTE.

The protein belongs to the YPI1 family.

The protein localises to the nucleus. In terms of biological role, regulator of type 1 phosphatases which maintains protein phosphatase activity under strict control. The chain is Type 1 phosphatases regulator ypi-1 (ypi-1) from Neurospora crassa (strain ATCC 24698 / 74-OR23-1A / CBS 708.71 / DSM 1257 / FGSC 987).